Reading from the N-terminus, the 423-residue chain is Histidine--tRNA ligase (423 aa).

The protein belongs to the class-II aminoacyl-tRNA synthetase family. As to quaternary structure, homodimer.

It is found in the cytoplasm. The catalysed reaction is tRNA(His) + L-histidine + ATP = L-histidyl-tRNA(His) + AMP + diphosphate + H(+). This is Histidine--tRNA ligase from Rhodococcus erythropolis (strain PR4 / NBRC 100887).